Here is a 43-residue protein sequence, read N- to C-terminus: Jararafibrase-3 (43 aa).

Positions M10 to F43 constitute a C-type lectin domain.

This sequence belongs to the true venom lectin family. Monomer. Expressed by the venom gland.

The protein resides in the secreted. Inhibited by 1,10-phenanthroline and EDTA. Functionally, may have both metalloproteinase and lectin activities. Induces local hemorrhage in the skin of rats. Degrades type-IV collagen, gelatin, laminin and fibronectin. Has hemagglutinating activity on red blood cells. This is Jararafibrase-3 from Bothrops jararaca (Jararaca).